Reading from the N-terminus, the 540-residue chain is Keratin, type II cytoskeletal 73 (540 aa).

The head stretch occupies residues 1-131 (MSRQFTYKSG…DPEIQKVCAQ (131 aa)). Positions 132–167 (EREQIKALNNKFASFIDKVRFLEQQNQVLGTKWELL) are coil 1A. One can recognise an IF rod domain in the interval 132–445 (EREQIKALNN…KLLEGEECRM (314 aa)). The segment at 168 to 186 (QQQDLDNCKNNLEPILEGY) is linker 1. Positions 187-278 (ISNLRKQLEM…CLYEGEIAQM (92 aa)) are coil 1B. A linker 12 region spans residues 279-302 (QSHISDTSVILSMDNNRNLDLNSI). The interval 303–441 (IAEVRAQYED…ATYRKLLEGE (139 aa)) is coil 2. Residues 442–540 (ECRMSGEYTN…LSSPTKKTPR (99 aa)) form a tail region. The interval 509–540 (GEAKTRLGSTSEIKDLLGKTPALSSPTKKTPR) is disordered. Positions 530-540 (ALSSPTKKTPR) are enriched in polar residues.

Belongs to the intermediate filament family. Heterotetramer of two type I and two type II keratins.

Its function is as follows. Has a role in hair formation. Specific component of keratin intermediate filaments in the inner root sheath (IRS) of the hair follicle. The sequence is that of Keratin, type II cytoskeletal 73 (KRT73) from Bos taurus (Bovine).